The chain runs to 1293 residues: Phosphoribosylformylglycinamidine synthase (1293 aa).

Residues 305–316 (GAATGSGGEIRD) and alanine 676 each bind ATP. The tract at residues 305 to 327 (GAATGSGGEIRDEGATGRGSKPK) is disordered. Mg(2+) contacts are provided by aspartate 677, glutamate 716, asparagine 720, and aspartate 884. An ATP-binding site is contributed by serine 886. Positions 1040 to 1293 (MAILREQGVN…MFRNARVNLG (254 aa)) constitute a Glutamine amidotransferase type-1 domain. Cysteine 1133 (nucleophile) is an active-site residue. Residues histidine 1258 and glutamate 1260 contribute to the active site.

The protein in the N-terminal section; belongs to the FGAMS family. In terms of assembly, monomer.

The protein localises to the cytoplasm. The enzyme catalyses N(2)-formyl-N(1)-(5-phospho-beta-D-ribosyl)glycinamide + L-glutamine + ATP + H2O = 2-formamido-N(1)-(5-O-phospho-beta-D-ribosyl)acetamidine + L-glutamate + ADP + phosphate + H(+). Its pathway is purine metabolism; IMP biosynthesis via de novo pathway; 5-amino-1-(5-phospho-D-ribosyl)imidazole from N(2)-formyl-N(1)-(5-phospho-D-ribosyl)glycinamide: step 1/2. In terms of biological role, phosphoribosylformylglycinamidine synthase involved in the purines biosynthetic pathway. Catalyzes the ATP-dependent conversion of formylglycinamide ribonucleotide (FGAR) and glutamine to yield formylglycinamidine ribonucleotide (FGAM) and glutamate. The protein is Phosphoribosylformylglycinamidine synthase of Shewanella sp. (strain MR-4).